The following is an 85-amino-acid chain: Probable dolichol-phosphate mannosyltransferase subunit 3 (85 aa).

Helical transmembrane passes span 13 to 33 and 37 to 57; these read VLLV…LSYI and AHCL…VATF.

The protein belongs to the DPM3 family.

It localises to the endoplasmic reticulum membrane. It participates in protein modification; protein glycosylation. Its function is as follows. Stabilizer subunit of the dolichol-phosphate-mannose synthase complex. This is Probable dolichol-phosphate mannosyltransferase subunit 3 from Caenorhabditis briggsae.